The sequence spans 461 residues: Adenine DNA glycosylase (461 aa).

Glutamate 69 functions as the Proton donor/acceptor in the catalytic mechanism. The [4Fe-4S] cluster site is built by cysteine 226, cysteine 233, cysteine 236, and cysteine 242. A Nudix hydrolase domain is found at 296 to 437; sequence QREERALVVI…RAALEIKKRK (142 aa). Positions 340–366 match the Nudix box motif; the sequence is FGQESWPKDMDAEFQKSIAQWISNDSR.

The protein belongs to the Nth/MutY family. Monomer. Requires [4Fe-4S] cluster as cofactor.

The catalysed reaction is Hydrolyzes free adenine bases from 7,8-dihydro-8-oxoguanine:adenine mismatched double-stranded DNA, leaving an apurinic site.. Adenine glycosylase active on G-A mispairs. Has glycosylase and nicking activities and is active at A/G and A/GO sites. This is Adenine DNA glycosylase (myh1) from Schizosaccharomyces pombe (strain 972 / ATCC 24843) (Fission yeast).